The following is a 319-amino-acid chain: 4-hydroxy-3-methylbut-2-enyl diphosphate reductase (319 aa).

Position 15 (Cys-15) interacts with [4Fe-4S] cluster. His-44 and His-77 together coordinate (2E)-4-hydroxy-3-methylbut-2-enyl diphosphate. Positions 44 and 77 each coordinate dimethylallyl diphosphate. Residues His-44 and His-77 each coordinate isopentenyl diphosphate. Residue Cys-99 coordinates [4Fe-4S] cluster. His-127 lines the (2E)-4-hydroxy-3-methylbut-2-enyl diphosphate pocket. His-127 serves as a coordination point for dimethylallyl diphosphate. An isopentenyl diphosphate-binding site is contributed by His-127. Catalysis depends on Glu-129, which acts as the Proton donor. Thr-172 is a binding site for (2E)-4-hydroxy-3-methylbut-2-enyl diphosphate. Residue Cys-202 participates in [4Fe-4S] cluster binding. The (2E)-4-hydroxy-3-methylbut-2-enyl diphosphate site is built by Ser-230, Ser-231, Asn-232, and Ser-274. 4 residues coordinate dimethylallyl diphosphate: Ser-230, Ser-231, Asn-232, and Ser-274. Isopentenyl diphosphate is bound by residues Ser-230, Ser-231, Asn-232, and Ser-274.

It belongs to the IspH family. Requires [4Fe-4S] cluster as cofactor.

It catalyses the reaction isopentenyl diphosphate + 2 oxidized [2Fe-2S]-[ferredoxin] + H2O = (2E)-4-hydroxy-3-methylbut-2-enyl diphosphate + 2 reduced [2Fe-2S]-[ferredoxin] + 2 H(+). It carries out the reaction dimethylallyl diphosphate + 2 oxidized [2Fe-2S]-[ferredoxin] + H2O = (2E)-4-hydroxy-3-methylbut-2-enyl diphosphate + 2 reduced [2Fe-2S]-[ferredoxin] + 2 H(+). Its pathway is isoprenoid biosynthesis; dimethylallyl diphosphate biosynthesis; dimethylallyl diphosphate from (2E)-4-hydroxy-3-methylbutenyl diphosphate: step 1/1. The protein operates within isoprenoid biosynthesis; isopentenyl diphosphate biosynthesis via DXP pathway; isopentenyl diphosphate from 1-deoxy-D-xylulose 5-phosphate: step 6/6. Its function is as follows. Catalyzes the conversion of 1-hydroxy-2-methyl-2-(E)-butenyl 4-diphosphate (HMBPP) into a mixture of isopentenyl diphosphate (IPP) and dimethylallyl diphosphate (DMAPP). Acts in the terminal step of the DOXP/MEP pathway for isoprenoid precursor biosynthesis. In Xanthomonas euvesicatoria pv. vesicatoria (strain 85-10) (Xanthomonas campestris pv. vesicatoria), this protein is 4-hydroxy-3-methylbut-2-enyl diphosphate reductase.